Consider the following 247-residue polypeptide: Probable transcriptional regulatory protein lpp1249 (247 aa).

Belongs to the TACO1 family.

Its subcellular location is the cytoplasm. The chain is Probable transcriptional regulatory protein lpp1249 from Legionella pneumophila (strain Paris).